We begin with the raw amino-acid sequence, 538 residues long: Neutral protease B (538 aa).

An N-terminal signal peptide occupies residues 1-28 (MRNLTKTSLLLAGLCTAAQMVFVTHASA). A propeptide spans 29 to 223 (EESIEYDHTY…VIESFNAIHE (195 aa)) (activation peptide). Aspartate 365 is a binding site for Ca(2+). Position 369 (histidine 369) interacts with Zn(2+). The active site involves glutamate 370. Residues histidine 373 and glutamate 393 each coordinate Zn(2+). Ca(2+) contacts are provided by aspartate 404, aspartate 406, aspartate 407, glutamate 409, glutamate 412, tyrosine 415, threonine 416, isoleucine 419, and aspartate 422. The segment at 421–441 (GDSLRSLEDPSKQGNPDHYSN) is disordered. Histidine 453 serves as the catalytic Proton donor.

Belongs to the peptidase M4 family. Zn(2+) is required as a cofactor.

It localises to the secreted. With respect to regulation, protease activity can be inhibited in vitro by either a zinc specific chelator, 1,10-phenanthroline, or a metal chelator, EDTA. The enzyme is resistant to phenylmethylsulfonyl fluoride and iodoacetic acid. Protease able to cleave casein in vitro. The polypeptide is Neutral protease B (Bacillus subtilis (strain 168)).